We begin with the raw amino-acid sequence, 303 residues long: RING finger protein 148 (303 aa).

An N-terminal signal peptide occupies residues 1–34 (MSLLRITSSAHSSASSRLWRLGIFLLLSLPDSKG). Asn-43 carries N-linked (GlcNAc...) asparagine glycosylation. A PA domain is found at 65-167 (HSPLERVSGV…LKGMELLHLI (103 aa)). A helical transmembrane segment spans residues 186 to 208 (WLSHYIMSLFTFLTATVAYLFLY). Residues 256 to 297 (CVVCFDIYKPQDVVRILTCKHIFHKACIDPWLLAHRTCPMCK) form an RING-type; atypical zinc finger.

The protein resides in the membrane. In Bos taurus (Bovine), this protein is RING finger protein 148 (RNF148).